We begin with the raw amino-acid sequence, 135 residues long: Actin-related protein 2/3 complex subunit 5B (135 aa).

It belongs to the ARPC5 family. Component of the Arp2/3 complex composed of ARP2, ARP3, ARPC1/p41-ARC, ARPC2/p34-ARC, ARPC3/p21-ARC, ARPC4/p20-ARC and ARPC5/p16-ARC.

Its subcellular location is the cytoplasm. The protein localises to the cytoskeleton. The protein resides in the cell projection. Its function is as follows. Functions as a component of the Arp2/3 complex which is involved in regulation of actin polymerization and together with an activating nucleation-promoting factor (NPF) mediates the formation of branched actin networks. Arp2/3 complex plays a critical role in the control of cell morphogenesis via the modulation of cell polarity development. In Arabidopsis thaliana (Mouse-ear cress), this protein is Actin-related protein 2/3 complex subunit 5B (ARPC5B).